The chain runs to 495 residues: Carbohydrate oxidase (495 aa).

The first 22 residues, 1 to 22 (MRSAFILALGLITASADALVTR), serve as a signal peptide directing secretion. The region spanning 55 to 229 (LPYIPTAIAQ…AVWKLATFPA (175 aa)) is the FAD-binding PCMH-type domain. Positions 92 to 154 (HSYASFGFGG…YGRAISHGTC (63 aa)) form a cross-link, 6-(S-cysteinyl)-8alpha-(pros-histidyl)-FAD (His-Cys). N-linked (GlcNAc...) asparagine glycans are attached at residues Asn244 and Asn417.

Belongs to the oxygen-dependent FAD-linked oxidoreductase family. FAD is required as a cofactor. The FAD cofactor is bound via a bicovalent 6-S-cysteinyl, 8alpha-N1-histidyl FAD linkage.

Its subcellular location is the secreted. The enzyme catalyses beta-D-glucose + O2 = D-glucono-1,5-lactone + H2O2. It catalyses the reaction D-galactose + O2 = D-galactono-1,5-lactone + H2O2. The catalysed reaction is D-cellobiose + O2 = D-cellobiono-1,5-lactone + H2O2. It carries out the reaction beta-lactose + O2 = lactobiono-1,5-lactone + H2O2. The enzyme catalyses D-maltose + O2 = D-maltobiono-1,5-lactone + H2O2. It catalyses the reaction D-xylose + O2 = D-xylono-1,5-lactone + H2O2. Functionally, catalyzes the selective oxidation of C1 hydroxyl moieties on mono-, oligo- and polysaccharides with concomitant reduction of molecular oxygen to hydrogen peroxide. This results in the formation of the corresponding lactones, which typically undergo spontaneous hydrolysis. Carbohydrate oxidase is able to oxidize a variety of substrates including D-glucose, D-galactose, D-xylose, D-maltose, D-cellobiose, and lactose. In addition, among various oligosaccharides, the enzyme preferred tetrameric dextrins, indicating a favorable interaction of four linked glucose units with the substrate binding pocket. The protein is Carbohydrate oxidase of Microdochium nivale (Pink snow mold).